Reading from the N-terminus, the 473-residue chain is Glutamate--tRNA ligase 2 (473 aa).

The 'HIGH' region signature appears at 11–21 (PSPTGYLHIGG). Basic and acidic residues predominate over residues 113–133 (KARAEGRPPRYDGRWRDRDPS). The tract at residues 113-136 (KARAEGRPPRYDGRWRDRDPSEAP) is disordered. A 'KMSKS' region motif is present at residues 240–244 (KLSKR). Lysine 243 is a binding site for ATP.

Belongs to the class-I aminoacyl-tRNA synthetase family. Glutamate--tRNA ligase type 1 subfamily. Monomer.

The protein localises to the cytoplasm. The enzyme catalyses tRNA(Glu) + L-glutamate + ATP = L-glutamyl-tRNA(Glu) + AMP + diphosphate. Functionally, catalyzes the attachment of glutamate to tRNA(Glu) in a two-step reaction: glutamate is first activated by ATP to form Glu-AMP and then transferred to the acceptor end of tRNA(Glu). The sequence is that of Glutamate--tRNA ligase 2 from Brucella suis biovar 1 (strain 1330).